We begin with the raw amino-acid sequence, 352 residues long: Speedy protein E18 (352 aa).

Over residues 1–12 the composition is skewed to basic residues; that stretch reads MDRTKTRFRKRG. The tract at residues 1-90 is disordered; that stretch reads MDRTKTRFRK…EPEKELAPEP (90 aa). The span at 16–39 shows a compositional bias: polar residues; the sequence is GKITTSRQPHPQNEQSLQRSTSGY. Residues 76-90 show a composition bias toward acidic residues; that stretch reads DESEEEPEKELAPEP.

The protein belongs to the Speedy/Ringo family.

The protein is Speedy protein E18 of Homo sapiens (Human).